A 345-amino-acid polypeptide reads, in one-letter code: Phosphoribosylformylglycinamidine cyclo-ligase (345 aa).

It belongs to the AIR synthase family.

It localises to the cytoplasm. The enzyme catalyses 2-formamido-N(1)-(5-O-phospho-beta-D-ribosyl)acetamidine + ATP = 5-amino-1-(5-phospho-beta-D-ribosyl)imidazole + ADP + phosphate + H(+). It functions in the pathway purine metabolism; IMP biosynthesis via de novo pathway; 5-amino-1-(5-phospho-D-ribosyl)imidazole from N(2)-formyl-N(1)-(5-phospho-D-ribosyl)glycinamide: step 2/2. The chain is Phosphoribosylformylglycinamidine cyclo-ligase from Lactobacillus acidophilus (strain ATCC 700396 / NCK56 / N2 / NCFM).